The chain runs to 402 residues: Envelope glycoprotein D (402 aa).

Residues 1-17 (MLLAALLAALVARTTLG) form the signal peptide. Intrachain disulfides connect C66-C189, C105-C205, and C117-C126. Positions 238–316 (YRKNGRTLPR…RPTPRPPRPE (79 aa)) are profusion. The disordered stretch occupies residues 252–350 (ATPYAIDPAR…PRTPAAPGVS (99 aa)). Residues 269 to 278 (PRPRPRPRPR) show a composition bias toward basic residues. The segment covering 282–292 (EPAPATPAPPD) has biased composition (pro residues). Residues 293-304 (RLPEPATRDHAA) are compositionally biased toward basic and acidic residues. Residues 356–376 (IVGTGTAMGALLVGVCVYIFF) form a helical membrane-spanning segment.

The protein belongs to the herpesviridae glycoprotein D family. Post-translationally, not N-glycosylated.

The protein localises to the virion membrane. Its function is as follows. Envelope glycoprotein that binds to the host cell entry receptor NECTIN1, promoting the virus entry into host cells. In contrast, does not use host TNFRSF14 as receptor. May trigger fusion with host membrane, by recruiting the fusion machinery composed of gB and gH/gL. The sequence is that of Envelope glycoprotein D from Suid herpesvirus 1 (strain Rice) (SuHV-1).